Reading from the N-terminus, the 64-residue chain is Large ribosomal subunit protein bL35 (64 aa).

The segment at 18 to 39 (GSGLVKHYPSNKHHKNTHKKEN) is disordered. Positions 26-39 (PSNKHHKNTHKKEN) are enriched in basic residues.

The protein belongs to the bacterial ribosomal protein bL35 family.

The chain is Large ribosomal subunit protein bL35 from Symbiobacterium thermophilum (strain DSM 24528 / JCM 14929 / IAM 14863 / T).